Consider the following 177-residue polypeptide: Adenine phosphoribosyltransferase (177 aa).

The protein belongs to the purine/pyrimidine phosphoribosyltransferase family. As to quaternary structure, homodimer.

Its subcellular location is the cytoplasm. It catalyses the reaction AMP + diphosphate = 5-phospho-alpha-D-ribose 1-diphosphate + adenine. The protein operates within purine metabolism; AMP biosynthesis via salvage pathway; AMP from adenine: step 1/1. Catalyzes a salvage reaction resulting in the formation of AMP, that is energically less costly than de novo synthesis. This is Adenine phosphoribosyltransferase from Chlorobium limicola (strain DSM 245 / NBRC 103803 / 6330).